The sequence spans 843 residues: Translation initiation factor IF-2 (843 aa).

Disordered stretches follow at residues 55-185 and 209-228; these read AEAV…EDRD and KVEEEQKPKEPQKKNKQVKV. The span at 62–106 shows a compositional bias: basic and acidic residues; that stretch reads PQEKPKKSAPKKEEKPKEEVKKEAEEKVAASKKEEEKPQEKKSVE. Residues 114–128 are compositionally biased toward basic residues; it reads LKKRRGLVIVKKKRP. The segment covering 129-141 has biased composition (basic and acidic residues); that stretch reads KVEPKVEEKEAKQ. The span at 156–165 shows a compositional bias: basic residues; that stretch reads LKRKPKKAKK. Composition is skewed to basic and acidic residues over residues 171-185 and 209-221; these read KKNEGKKIEILEDRD and KVEEEQKPKEPQK. In terms of domain architecture, tr-type G spans 342 to 511; it reads ERPPVITIMG…LLQAEIMELK (170 aa). The tract at residues 351–358 is G1; sequence GHVDHGKT. 351–358 is a GTP binding site; sequence GHVDHGKT. The G2 stretch occupies residues 376–380; the sequence is GITQH. The G3 stretch occupies residues 397–400; sequence DTPG. Residues 397–401 and 451–454 each bind GTP; these read DTPGH and NKID. The G4 stretch occupies residues 451–454; sequence NKID. Residues 487–489 form a G5 region; the sequence is SAK.

Belongs to the TRAFAC class translation factor GTPase superfamily. Classic translation factor GTPase family. IF-2 subfamily.

The protein resides in the cytoplasm. Its function is as follows. One of the essential components for the initiation of protein synthesis. Protects formylmethionyl-tRNA from spontaneous hydrolysis and promotes its binding to the 30S ribosomal subunits. Also involved in the hydrolysis of GTP during the formation of the 70S ribosomal complex. The protein is Translation initiation factor IF-2 of Nitratiruptor sp. (strain SB155-2).